We begin with the raw amino-acid sequence, 121 residues long: Large ribosomal subunit protein eL18 (121 aa).

This sequence belongs to the eukaryotic ribosomal protein eL18 family.

The sequence is that of Large ribosomal subunit protein eL18 from Methanoregula boonei (strain DSM 21154 / JCM 14090 / 6A8).